A 374-amino-acid chain; its full sequence is Ribosomal RNA large subunit methyltransferase G (374 aa).

The protein belongs to the methyltransferase superfamily. RlmG family.

Its subcellular location is the cytoplasm. The catalysed reaction is guanosine(1835) in 23S rRNA + S-adenosyl-L-methionine = N(2)-methylguanosine(1835) in 23S rRNA + S-adenosyl-L-homocysteine + H(+). In terms of biological role, specifically methylates the guanine in position 1835 (m2G1835) of 23S rRNA. The polypeptide is Ribosomal RNA large subunit methyltransferase G (Pseudomonas fluorescens (strain ATCC BAA-477 / NRRL B-23932 / Pf-5)).